The chain runs to 443 residues: MVRGRIFRLSVRDVRFPTSLGGHGSDAMHTDPDYSAAYVVIETDAEDGIKGCGITFTLGKGTEVVVCAVNALAHHVLNKDLKDIVGDFRGFYRQLTSDGQPRWIGPEKGVVHLATAAVLNAVWDLWAKQEGKPVWKLLVDMDPRTLVSCIDFRYITDVLTEEDALEILQKGQVGKKEREKQMLAQGYPAYTTSCAWLGYSDDTLKQLCAQALKDGWTRFKVKVGADLQDDVRRCQIIRDMIGLEKTLMMDANQRWDVPEAVEWMSKLAKFKPLWIEEPTSPDDILGHATISKALVPLGIGIATGEQCHNRVIFKQLLQAKALQFLQIDSCRLGSVNENLSVLLMAKKFEIPVCPHAGGVGLCELVQHLIIFDYISVSASLENRMCEYVDHLHEHFKYPVMIQRASYMPPKDPGYSTEMKEESVKKHQYPDGEVWKKLLAAQEN.

Substrate-binding positions include 24–26 (GSD) and Tyr-34. Ser-148 is subject to Phosphoserine. A substrate-binding site is contributed by Lys-220. Residue Lys-222 is the Proton donor/acceptor of the active site. Mg(2+) is bound at residue Asp-250. Substrate contacts are provided by residues Asn-252, Glu-276, Glu-305, 355 to 357 (HAG), and Glu-386. Glu-276 and Glu-305 together coordinate Mg(2+). His-355 is an active-site residue.

The protein belongs to the mandelate racemase/muconate lactonizing enzyme family. ENOSF1 subfamily. Requires Mg(2+) as cofactor. Could be sumoylated.

The protein localises to the mitochondrion. It carries out the reaction L-fuconate = 2-dehydro-3-deoxy-L-fuconate + H2O. Functionally, plays a role in the catabolism of L-fucose, a sugar that is part of the carbohydrates that are attached to cellular glycoproteins. Catalyzes the dehydration of L-fuconate to 2-keto-3-deoxy-L-fuconate by the abstraction of the 2-proton to generate an enediolate intermediate that is stabilized by the magnesium ion. May down-regulate thymidylate synthase activity, possibly already at the RNA level, by promoting the degradation of TYMS mRNA via an antisense RNA-based mechanism. The chain is Mitochondrial enolase superfamily member 1 (ENOSF1) from Pongo abelii (Sumatran orangutan).